The sequence spans 1053 residues: DNA-directed RNA polymerase subunit beta' (1053 aa).

Zn(2+) contacts are provided by C60, C62, C75, and C78. Residues D449, D451, and D453 each contribute to the Mg(2+) site. Positions 818, 892, 899, and 902 each coordinate Zn(2+).

Belongs to the RNA polymerase beta' chain family. In terms of assembly, the RNAP catalytic core consists of 2 alpha, 1 beta, 1 beta' and 1 omega subunit. When a sigma factor is associated with the core the holoenzyme is formed, which can initiate transcription. It depends on Mg(2+) as a cofactor. Zn(2+) is required as a cofactor.

It catalyses the reaction RNA(n) + a ribonucleoside 5'-triphosphate = RNA(n+1) + diphosphate. In terms of biological role, DNA-dependent RNA polymerase catalyzes the transcription of DNA into RNA using the four ribonucleoside triphosphates as substrates. The chain is DNA-directed RNA polymerase subunit beta' from Listeria grayi (Listeria murrayi).